The following is a 311-amino-acid chain: Ribosomal RNA small subunit methyltransferase H (311 aa).

S-adenosyl-L-methionine contacts are provided by residues 32-34 (AGH), aspartate 52, phenylalanine 79, aspartate 100, and glutamine 107.

The protein belongs to the methyltransferase superfamily. RsmH family.

It is found in the cytoplasm. It carries out the reaction cytidine(1402) in 16S rRNA + S-adenosyl-L-methionine = N(4)-methylcytidine(1402) in 16S rRNA + S-adenosyl-L-homocysteine + H(+). Functionally, specifically methylates the N4 position of cytidine in position 1402 (C1402) of 16S rRNA. The polypeptide is Ribosomal RNA small subunit methyltransferase H (Staphylococcus aureus (strain bovine RF122 / ET3-1)).